We begin with the raw amino-acid sequence, 76 residues long: Putative membrane protein insertion efficiency factor (76 aa).

It belongs to the UPF0161 family.

The protein resides in the cell inner membrane. Functionally, could be involved in insertion of integral membrane proteins into the membrane. This chain is Putative membrane protein insertion efficiency factor, found in Anaeromyxobacter dehalogenans (strain 2CP-C).